The sequence spans 201 residues: Probable nicotinate-nucleotide adenylyltransferase (201 aa).

Belongs to the NadD family.

The enzyme catalyses nicotinate beta-D-ribonucleotide + ATP + H(+) = deamido-NAD(+) + diphosphate. It functions in the pathway cofactor biosynthesis; NAD(+) biosynthesis; deamido-NAD(+) from nicotinate D-ribonucleotide: step 1/1. Catalyzes the reversible adenylation of nicotinate mononucleotide (NaMN) to nicotinic acid adenine dinucleotide (NaAD). In Clostridium botulinum (strain Loch Maree / Type A3), this protein is Probable nicotinate-nucleotide adenylyltransferase.